The following is a 252-amino-acid chain: Small ribosomal subunit protein uS2A (252 aa).

Ser-2 is modified (N-acetylserine). The interval 209 to 252 is disordered; it reads EVEQQAAEETTSTGADAEESKEEVAEGQNEASEWAEENTEAVSW. Residues 241–252 show a composition bias toward acidic residues; that stretch reads EWAEENTEAVSW.

The protein belongs to the universal ribosomal protein uS2 family. In terms of assembly, component of the small ribosomal subunit. Mature ribosomes consist of a small (40S) and a large (60S) subunit. The 40S subunit contains about 33 different proteins and 1 molecule of RNA (18S). The 60S subunit contains about 49 different proteins and 3 molecules of RNA (25S, 5.8S and 5S). Interacts with RPS21.

The protein localises to the cytoplasm. Its function is as follows. Required for the assembly and/or stability of the 40S ribosomal subunit. Required for the processing of the 20S rRNA-precursor to mature 18S rRNA in a late step of the maturation of 40S ribosomal subunits. In Vanderwaltozyma polyspora (strain ATCC 22028 / DSM 70294 / BCRC 21397 / CBS 2163 / NBRC 10782 / NRRL Y-8283 / UCD 57-17) (Kluyveromyces polysporus), this protein is Small ribosomal subunit protein uS2A.